The following is a 199-amino-acid chain: NADH-quinone oxidoreductase subunit C (199 aa).

It belongs to the complex I 30 kDa subunit family. As to quaternary structure, NDH-1 is composed of 14 different subunits. Subunits NuoB, C, D, E, F, and G constitute the peripheral sector of the complex.

The protein resides in the cell inner membrane. The enzyme catalyses a quinone + NADH + 5 H(+)(in) = a quinol + NAD(+) + 4 H(+)(out). Functionally, NDH-1 shuttles electrons from NADH, via FMN and iron-sulfur (Fe-S) centers, to quinones in the respiratory chain. The immediate electron acceptor for the enzyme in this species is believed to be ubiquinone. Couples the redox reaction to proton translocation (for every two electrons transferred, four hydrogen ions are translocated across the cytoplasmic membrane), and thus conserves the redox energy in a proton gradient. The chain is NADH-quinone oxidoreductase subunit C from Cupriavidus metallidurans (strain ATCC 43123 / DSM 2839 / NBRC 102507 / CH34) (Ralstonia metallidurans).